The sequence spans 77 residues: Large ribosomal subunit protein eL14 (77 aa).

The protein belongs to the eukaryotic ribosomal protein eL14 family.

This Methanococcus vannielii (strain ATCC 35089 / DSM 1224 / JCM 13029 / OCM 148 / SB) protein is Large ribosomal subunit protein eL14.